The chain runs to 197 residues: Ribonuclease HII (197 aa).

Residues 3 to 192 enclose the RNase H type-2 domain; the sequence is QLIAGVDEVG…VQLSLMQRGG (190 aa). Residues Asp9, Glu10, and Asp101 each contribute to the a divalent metal cation site.

It belongs to the RNase HII family. The cofactor is Mn(2+). Requires Mg(2+) as cofactor.

The protein resides in the cytoplasm. The enzyme catalyses Endonucleolytic cleavage to 5'-phosphomonoester.. Endonuclease that specifically degrades the RNA of RNA-DNA hybrids. In Pseudoalteromonas atlantica (strain T6c / ATCC BAA-1087), this protein is Ribonuclease HII.